Reading from the N-terminus, the 364-residue chain is Chorismate synthase (364 aa).

The segment at 41-60 is disordered; that stretch reads MQHDLDRRRPGTSRYTTARR. Residues Arg48 and Arg54 each contribute to the NADP(+) site. FMN is bound by residues 125-127, 238-239, Gly278, 293-297, and Arg319; these read RSS, NA, and KPTSS.

Belongs to the chorismate synthase family. As to quaternary structure, homotetramer. It depends on FMNH2 as a cofactor.

The catalysed reaction is 5-O-(1-carboxyvinyl)-3-phosphoshikimate = chorismate + phosphate. It functions in the pathway metabolic intermediate biosynthesis; chorismate biosynthesis; chorismate from D-erythrose 4-phosphate and phosphoenolpyruvate: step 7/7. Functionally, catalyzes the anti-1,4-elimination of the C-3 phosphate and the C-6 proR hydrogen from 5-enolpyruvylshikimate-3-phosphate (EPSP) to yield chorismate, which is the branch point compound that serves as the starting substrate for the three terminal pathways of aromatic amino acid biosynthesis. This reaction introduces a second double bond into the aromatic ring system. The polypeptide is Chorismate synthase (Shewanella baltica (strain OS223)).